Consider the following 95-residue polypeptide: Integration host factor subunit beta (95 aa).

This sequence belongs to the bacterial histone-like protein family. In terms of assembly, heterodimer of an alpha and a beta chain.

This protein is one of the two subunits of integration host factor, a specific DNA-binding protein that functions in genetic recombination as well as in transcriptional and translational control. The protein is Integration host factor subunit beta of Ruegeria sp. (strain TM1040) (Silicibacter sp.).